Consider the following 134-residue polypeptide: DNA-binding protein H-NS homolog (134 aa).

The segment at 106-134 (HKTWTGQGRTPRPIQNALNKGKSLSDFEI) is disordered. Residues 112 to 117 (QGRTPR) mediate DNA binding.

This sequence belongs to the histone-like protein H-NS family. Homodimer that oligomerizes on DNA into higher-order complexes that form bridges between disparate regions of DNA compacting it.

It localises to the cytoplasm. Its subcellular location is the nucleoid. Functionally, a DNA-binding protein implicated in transcriptional repression and chromosome organization and compaction. Binds nucleation sites in AT-rich DNA and bridges them, forming higher-order nucleoprotein complexes and condensing the chromosome. As many horizontally transferred genes are AT-rich, it plays a central role in silencing foreign genes. A subset of genes are repressed by H-NS in association with other proteins. The sequence is that of DNA-binding protein H-NS homolog (hns) from Haemophilus influenzae (strain ATCC 51907 / DSM 11121 / KW20 / Rd).